The primary structure comprises 199 residues: Holliday junction resolvase RecU (199 aa).

The Mg(2+) site is built by T82, D84, E97, and Q116.

Belongs to the RecU family. It depends on Mg(2+) as a cofactor.

It localises to the cytoplasm. The catalysed reaction is Endonucleolytic cleavage at a junction such as a reciprocal single-stranded crossover between two homologous DNA duplexes (Holliday junction).. Its function is as follows. Endonuclease that resolves Holliday junction intermediates in genetic recombination. Cleaves mobile four-strand junctions by introducing symmetrical nicks in paired strands. Promotes annealing of linear ssDNA with homologous dsDNA. Required for DNA repair, homologous recombination and chromosome segregation. The chain is Holliday junction resolvase RecU from Streptococcus agalactiae serotype Ia (strain ATCC 27591 / A909 / CDC SS700).